An 817-amino-acid polypeptide reads, in one-letter code: U3 small nucleolar RNA-associated protein 13 (817 aa).

WD repeat units lie at residues 59–100 (EDEQ…RSMK), 102–139 (SSPS…ITHS), 142–187 (GHGG…HTLQ), 191–233 (SAVR…KCKL), 238–280 (PVNQ…VLKR), 386–425 (GHED…CKFD), 432–476 (GHSA…ASMD), 489–528 (AHEK…LEAT), 531–572 (NHKR…KTLE), 573–614 (GHTN…KTLD), 616–654 (HNNR…EIEE), and 664–705 (EQEQ…LGES).

In terms of assembly, interacts with snoRNA U3. Interacts with MPP10. Component of the ribosomal small subunit (SSU) processome composed of at least 40 protein subunits and snoRNA U3.

The protein localises to the nucleus. The protein resides in the nucleolus. Involved in nucleolar processing of pre-18S ribosomal RNA. The chain is U3 small nucleolar RNA-associated protein 13 (UTP13) from Saccharomyces cerevisiae (strain ATCC 204508 / S288c) (Baker's yeast).